The primary structure comprises 98 residues: Cell division topological specificity factor (98 aa).

Belongs to the MinE family.

Its function is as follows. Prevents the cell division inhibition by proteins MinC and MinD at internal division sites while permitting inhibition at polar sites. This ensures cell division at the proper site by restricting the formation of a division septum at the midpoint of the long axis of the cell. In Nitrosomonas europaea (strain ATCC 19718 / CIP 103999 / KCTC 2705 / NBRC 14298), this protein is Cell division topological specificity factor.